The chain runs to 165 residues: Transcriptional repressor NrdR (165 aa).

A zinc finger lies at 3-34 (CPFCRHPDSRVVDSREADEGQAIRRRRSCPEC). The ATP-cone domain occupies 46–136 (LSVVKRSGVT…VYKSFSSAAD (91 aa)).

The protein belongs to the NrdR family. Zn(2+) is required as a cofactor.

Its function is as follows. Negatively regulates transcription of bacterial ribonucleotide reductase nrd genes and operons by binding to NrdR-boxes. The polypeptide is Transcriptional repressor NrdR (Rhodococcus erythropolis (strain PR4 / NBRC 100887)).